A 280-amino-acid chain; its full sequence is Ribosomal RNA small subunit methyltransferase A (280 aa).

Positions 28, 30, 55, 77, 103, and 122 each coordinate S-adenosyl-L-methionine.

This sequence belongs to the class I-like SAM-binding methyltransferase superfamily. rRNA adenine N(6)-methyltransferase family. RsmA subfamily.

The protein resides in the cytoplasm. The catalysed reaction is adenosine(1518)/adenosine(1519) in 16S rRNA + 4 S-adenosyl-L-methionine = N(6)-dimethyladenosine(1518)/N(6)-dimethyladenosine(1519) in 16S rRNA + 4 S-adenosyl-L-homocysteine + 4 H(+). Functionally, specifically dimethylates two adjacent adenosines (A1518 and A1519) in the loop of a conserved hairpin near the 3'-end of 16S rRNA in the 30S particle. May play a critical role in biogenesis of 30S subunits. The sequence is that of Ribosomal RNA small subunit methyltransferase A from Dinoroseobacter shibae (strain DSM 16493 / NCIMB 14021 / DFL 12).